Here is a 590-residue protein sequence, read N- to C-terminus: Probable metalloendopeptidase G1-type (590 aa).

His-41 serves as a coordination point for Zn(2+). Glu-44 is a catalytic residue. His-45 lines the Zn(2+) pocket.

The protein belongs to the peptidase M44 family. Requires Zn(2+) as cofactor.

Functionally, seems to be involved in viral proteins maturation by cleavage at Ala-Gly-|-Xaa motifs. The polypeptide is Probable metalloendopeptidase G1-type (Oryctolagus cuniculus (Rabbit)).